The following is a 57-amino-acid chain: uncharacterized protein (57 aa).

A helical transmembrane segment spans residues 4 to 26 (FMPIRVFLYSYVIINSLLSSFFH).

The protein resides in the membrane. This is an uncharacterized protein from Saccharomyces cerevisiae (strain ATCC 204508 / S288c) (Baker's yeast).